A 201-amino-acid polypeptide reads, in one-letter code: MQTSPLLTQLMEALRCLPGVGPKSAQRMAFTLLQRDRSGGMRLAQALTRAMSEIGHCADCRTFTEQDVCNICSNPRRQENGQICVVESPADIYAIEQTGQFSGRYFVLMGHLSPLDGIGPDDIGLDRLEQRLASEKISELILATNPTVEGEATANYIAELCAEAGVEASRIAHGVPVGGELEMVDGTTLSHSLAGRHKIIF.

The segment at 57–72 (CADCRTFTEQDVCNIC) adopts a C4-type zinc-finger fold. Positions 81-176 (GQICVVESPA…EASRIAHGVP (96 aa)) constitute a Toprim domain.

This sequence belongs to the RecR family.

Its function is as follows. May play a role in DNA repair. It seems to be involved in an RecBC-independent recombinational process of DNA repair. It may act with RecF and RecO. The chain is Recombination protein RecR from Salmonella agona (strain SL483).